A 435-amino-acid chain; its full sequence is Evolutionarily conserved signaling intermediate in Toll pathway, mitochondrial (435 aa).

Residues 1–48 (MSWVQVNLLVRSLSRGWGGLCRPALSGTPFAQVSLQALRGLHCSAATH) constitute a mitochondrion transit peptide. A Glycyl lysine isopeptide (Lys-Gly) (interchain with G-Cter in ubiquitin) cross-link involves residue lysine 372. The interval 401–435 (LTTSRLEGQSPPHSPPKGPEEDDETIQAEQQQGQS) is disordered.

Belongs to the ECSIT family. Interacts with MAP3K1, SMAD4 and TRAF6. Interacts with SMAD1 only after BMP4-treatment. Part of the mitochondrial complex I assembly/MCIA complex that comprises at least the core subunits TMEM126B, NDUFAF1, ECSIT and ACAD9 and complement subunits such as COA1 and TMEM186. Interacts with NDUFAF1. Interacts with ACAD9. Interacts with TRIM59. Interacts with TMEM70 and TMEM242. Interacts (when ubiquitinated) with NF-kappa-B subunits RELA and NFKB1. Interacts with RIGI, IFIT1 and MAVS; these interactions promote RLR-mediated type I IFN induction. Interacts with SQSTM1; this interaction inhibits TLR4 signaling via functional regulation of the TRAF6-ECSIT complex. Interacts with cereblon/CRBN; this interaction inhibits the ubiquitination of ECSIT. In terms of processing, ubiquitinated on Lys-372; leading to translocation in the nucleus together with RELA and NFKB1 and expression of NF-kappa-B-dependent genes. In terms of tissue distribution, detected in heart, brain, lung, liver, skeletal muscle, kidney and testis. Detected in embryonic mesoderm and epiblast, and in extraembryonic ectoderm.

Its subcellular location is the cytoplasm. The protein localises to the nucleus. The protein resides in the mitochondrion. Its function is as follows. Adapter protein that plays a role in different signaling pathways including TLRs and IL-1 pathways or innate antiviral induction signaling. Plays a role in the activation of NF-kappa-B by forming a signal complex with TRAF6 and TAK1/MAP3K7 to activate TAK1/MAP3K7 leading to activation of IKKs. Once ubiquitinated, interacts with the dissociated RELA and NFKB1 proteins and translocates to the nucleus where it induces NF-kappa-B-dependent gene expression. Plays a role in innate antiviral immune response by bridging the pattern recognition receptors RIGI and MDA5/IFIT1 to the MAVS complex at the mitochondrion. Promotes proteolytic activation of MAP3K1. Involved in the BMP signaling pathway. Required for normal embryonic development. As part of the MCIA complex, involved in the assembly of the mitochondrial complex I. The polypeptide is Evolutionarily conserved signaling intermediate in Toll pathway, mitochondrial (Mus musculus (Mouse)).